A 147-amino-acid polypeptide reads, in one-letter code: Effector TSP1 (147 aa).

The N-terminal stretch at 1 to 19 is a signal peptide; that stretch reads MQITKTLVATLFAASTAFA. 2 cysteine pairs are disulfide-bonded: Cys-44/Cys-51 and Cys-67/Cys-87.

In terms of assembly, homodimer.

It is found in the secreted. In terms of biological role, stimulates salicylic acid signaling in host plant roots. The sequence is that of Effector TSP1 from Hypocrea virens (strain Gv29-8 / FGSC 10586) (Gliocladium virens).